The primary structure comprises 815 residues: MKFTLSWLKQFLEISASVTEIAEALTDIGLEVEEVIDKATELQKFEVAYIRNIKPHPSADKLKLCDVETKNGILQIVCGASNVRADIKVVLANIGIEIPKGNFKIKESIIRGEKSYGMLCSEEELLLSSDSNGIIELPEYAVVGDNFTRYYGLDDPIFVINVTPNRGDVLGVYGIARDLSAKGLGTLKKLELPEIKSTFFSKIKLNVHDKAACPLFTFREIRNLKNKPSPSWLQQLLKNVGIKTISSLVDITNYIAYSFGQPIHVYDADRIYGALSVGRDCNCKVISYKNHEIATAVLKSSNDTANFYAINGKEYLLTENDLTIKDESGIQGLAGIICGAKSSCNDSTINVILEAACFNARLVAASGRRLKIDTESRYRNERNIDRNFTEKALDIATNLILSICGNCEVSEVVKVGEQELQKIPLDFSVYFLEKITGIKLSIKEIEVILNKLGFITDVKGDIIKVIAPSWRHDINILEDIAEEIVRIYGYDKIESIKLPELHQDNNNLREYKRISSFKRILASQGYDEVVTNSFMSSEDAKLFAELKEELFLLNPMSIDENYMRPTVLPNLISIVSKNLARAIKDMAFFEVGPSFINLNTELTYLTAIISGSFNNKNPHSLGRSYDIFDIKGALEQVIEYAGLSLDKCIVANETVLPQYYHPTRAINIRLGKNLLGHFGQIHPKILKYYDINQEIFAFELNITNLPLIKAKFGKRNELKVSDFQANFRDYSFIVNQDHRVGEIISYINNFNKNLVKSVMLFDIYSGDKLPEGKKSISIKIELQADDRTLSETDLNAFSQDLVESISQKFQGTLRE.

The tRNA-binding domain occupies 39–148 (ATELQKFEVA…EYAVVGDNFT (110 aa)). Positions 420–495 (LQKIPLDFSV…RIYGYDKIES (76 aa)) constitute a B5 domain. Asp473, Asp479, Glu482, and Glu483 together coordinate Mg(2+). Positions 721–814 (SDFQANFRDY…ISQKFQGTLR (94 aa)) constitute an FDX-ACB domain.

It belongs to the phenylalanyl-tRNA synthetase beta subunit family. Type 1 subfamily. As to quaternary structure, tetramer of two alpha and two beta subunits. Mg(2+) serves as cofactor.

The protein resides in the cytoplasm. The catalysed reaction is tRNA(Phe) + L-phenylalanine + ATP = L-phenylalanyl-tRNA(Phe) + AMP + diphosphate + H(+). The chain is Phenylalanine--tRNA ligase beta subunit from Rickettsia typhi (strain ATCC VR-144 / Wilmington).